The sequence spans 307 residues: tRNA dimethylallyltransferase (307 aa).

16 to 23 (GCTAVGKT) lines the ATP pocket. Residue 18-23 (TAVGKT) participates in substrate binding. The interval 41–44 (DSLL) is interaction with substrate tRNA.

It belongs to the IPP transferase family. In terms of assembly, monomer. Requires Mg(2+) as cofactor.

It catalyses the reaction adenosine(37) in tRNA + dimethylallyl diphosphate = N(6)-dimethylallyladenosine(37) in tRNA + diphosphate. In terms of biological role, catalyzes the transfer of a dimethylallyl group onto the adenine at position 37 in tRNAs that read codons beginning with uridine, leading to the formation of N6-(dimethylallyl)adenosine (i(6)A). The polypeptide is tRNA dimethylallyltransferase (Opitutus terrae (strain DSM 11246 / JCM 15787 / PB90-1)).